We begin with the raw amino-acid sequence, 493 residues long: Cytochrome P450 monooxygenase olcG (493 aa).

The chain crosses the membrane as a helical span at residues 15–35 (GILATGALVIFVALFLATFQF). C429 is a heme binding site.

Belongs to the cytochrome P450 family. Heme is required as a cofactor.

It localises to the membrane. Its pathway is secondary metabolite biosynthesis; terpenoid biosynthesis. Functionally, cytochrome P450 monooxygenase; part of the gene cluster that mediates the biosynthesis of 15-deoxyoxalicine B. The first step of the pathway is the synthesis of nicotinyl-CoA from nicotinic acid by the nicotinic acid-CoA ligase olcI. Nicotinyl-CoA is then a substrate of polyketide synthase olcA to produce 4-hydroxy-6-(3-pyridinyl)-2H-pyran-2-one (HPPO) which is further prenylated by the polyprenyl transferase olcH to yield geranylgeranyl-HPPO. Geranylgeranyl pyrophosphate is provided by the cluster-specific geranylgeranyl pyrophosphate synthase olcC. The FAD-dependent monooxygenase olcE catalyzes the epoxidation of geranylgeranyl-HPPO and the terpene cyclase olcD catalyzes the cyclization of the terpenoid component, resulting in the formation of the tricyclic terpene moiety seen in predecaturin E. The cytochrome P450 monooxygenase then catalyzes the allylic oxidation of predecaturin E, which is followed by spirocylization with concomitant loss of one molecule of water to form decaturin E. Decaturin E is the substrate of the cytochrome P450 monooxygenase olcJ which hydroxylates it at the C-29 position to form decaturin F. The short-chain dehydrogenase/reductase olcF may catalyze the oxidation of decaturin F to generate the 29-hydroxyl-27-one intermediate, and subsequent hemiacetal formation probably leads to the formation of decaturin C. The dioxygenase olcK may be a peroxisomal enzyme that catalyzes the hydroxylation of decaturin C into decaturin A once decaturin C is shuttled into the peroxisome by the MFS transporter olcL. Finally the cytochrome P450 monooxygenase olcB catalyzes the oxidative rearrangement to yield 15-deoxyoxalicine B. In the absence of olcJ, decaturin E may be shunted to a pathway in which it is oxidized to a ketone, possibly by olcF, to form decaturin D, which undergoes further allylic oxidation to yield decaturin G. Moreover, in the absence of oclK or oclL, oclB can convert decaturin C into 15-deoxyoxalicine A. The sequence is that of Cytochrome P450 monooxygenase olcG from Penicillium canescens.